The primary structure comprises 291 residues: Bis(5'-nucleosyl)-tetraphosphatase, symmetrical (291 aa).

This sequence belongs to the Ap4A hydrolase family.

The enzyme catalyses P(1),P(4)-bis(5'-adenosyl) tetraphosphate + H2O = 2 ADP + 2 H(+). Its function is as follows. Hydrolyzes diadenosine 5',5'''-P1,P4-tetraphosphate to yield ADP. The protein is Bis(5'-nucleosyl)-tetraphosphatase, symmetrical of Coxiella burnetii (strain CbuK_Q154) (Coxiella burnetii (strain Q154)).